The sequence spans 158 residues: Small ribosomal subunit protein uS7 (158 aa).

It belongs to the universal ribosomal protein uS7 family. Part of the 30S ribosomal subunit. Contacts proteins S9 and S11.

Its function is as follows. One of the primary rRNA binding proteins, it binds directly to 16S rRNA where it nucleates assembly of the head domain of the 30S subunit. Is located at the subunit interface close to the decoding center, probably blocks exit of the E-site tRNA. The chain is Small ribosomal subunit protein uS7 from Phocaeicola vulgatus (strain ATCC 8482 / DSM 1447 / JCM 5826 / CCUG 4940 / NBRC 14291 / NCTC 11154) (Bacteroides vulgatus).